A 273-amino-acid chain; its full sequence is Dermonecrotic toxin LsaSicTox-alphaIB1avi (273 aa).

Histidine 5 is an active-site residue. Mg(2+) contacts are provided by glutamate 25 and aspartate 27. Histidine 41 serves as the catalytic Nucleophile. 2 cysteine pairs are disulfide-bonded: cysteine 45–cysteine 51 and cysteine 47–cysteine 190. Residue aspartate 85 coordinates Mg(2+).

It belongs to the arthropod phospholipase D family. Class II subfamily. The cofactor is Mg(2+). Expressed by the venom gland.

The protein localises to the secreted. The enzyme catalyses an N-(acyl)-sphingosylphosphocholine = an N-(acyl)-sphingosyl-1,3-cyclic phosphate + choline. The catalysed reaction is an N-(acyl)-sphingosylphosphoethanolamine = an N-(acyl)-sphingosyl-1,3-cyclic phosphate + ethanolamine. It carries out the reaction a 1-acyl-sn-glycero-3-phosphocholine = a 1-acyl-sn-glycero-2,3-cyclic phosphate + choline. It catalyses the reaction a 1-acyl-sn-glycero-3-phosphoethanolamine = a 1-acyl-sn-glycero-2,3-cyclic phosphate + ethanolamine. In terms of biological role, dermonecrotic toxins cleave the phosphodiester linkage between the phosphate and headgroup of certain phospholipids (sphingolipid and lysolipid substrates), forming an alcohol (often choline) and a cyclic phosphate. This toxin acts on sphingomyelin (SM). It may also act on ceramide phosphoethanolamine (CPE), lysophosphatidylcholine (LPC) and lysophosphatidylethanolamine (LPE), but not on lysophosphatidylserine (LPS), and lysophosphatidylglycerol (LPG). It acts by transphosphatidylation, releasing exclusively cyclic phosphate products as second products. Induces dermonecrosis, hemolysis, increased vascular permeability, edema, inflammatory response, and platelet aggregation. In Loxosceles sabina (Tucson recluse spider), this protein is Dermonecrotic toxin LsaSicTox-alphaIB1avi.